The primary structure comprises 104 residues: MSEFKEVTVTKAASVYFDGKVTSRKVTFNDGSFKTLGIMMPGEYKFGTNEEELMEITAGECEILLAGATEWQNISDGQSFGVPANSSFEVRAKTLIDYCCTYIS.

The protein belongs to the nucleoside phosphorylase PpnP family.

It catalyses the reaction a purine D-ribonucleoside + phosphate = a purine nucleobase + alpha-D-ribose 1-phosphate. The enzyme catalyses adenosine + phosphate = alpha-D-ribose 1-phosphate + adenine. It carries out the reaction cytidine + phosphate = cytosine + alpha-D-ribose 1-phosphate. The catalysed reaction is guanosine + phosphate = alpha-D-ribose 1-phosphate + guanine. It catalyses the reaction inosine + phosphate = alpha-D-ribose 1-phosphate + hypoxanthine. The enzyme catalyses thymidine + phosphate = 2-deoxy-alpha-D-ribose 1-phosphate + thymine. It carries out the reaction uridine + phosphate = alpha-D-ribose 1-phosphate + uracil. The catalysed reaction is xanthosine + phosphate = alpha-D-ribose 1-phosphate + xanthine. In terms of biological role, catalyzes the phosphorolysis of diverse nucleosides, yielding D-ribose 1-phosphate and the respective free bases. Can use uridine, adenosine, guanosine, cytidine, thymidine, inosine and xanthosine as substrates. Also catalyzes the reverse reactions. This chain is Pyrimidine/purine nucleoside phosphorylase, found in Colwellia psychrerythraea (strain 34H / ATCC BAA-681) (Vibrio psychroerythus).